A 419-amino-acid polypeptide reads, in one-letter code: Gamma-glutamyl phosphate reductase (419 aa).

Belongs to the gamma-glutamyl phosphate reductase family.

It localises to the cytoplasm. It catalyses the reaction L-glutamate 5-semialdehyde + phosphate + NADP(+) = L-glutamyl 5-phosphate + NADPH + H(+). It participates in amino-acid biosynthesis; L-proline biosynthesis; L-glutamate 5-semialdehyde from L-glutamate: step 2/2. Functionally, catalyzes the NADPH-dependent reduction of L-glutamate 5-phosphate into L-glutamate 5-semialdehyde and phosphate. The product spontaneously undergoes cyclization to form 1-pyrroline-5-carboxylate. The polypeptide is Gamma-glutamyl phosphate reductase (Marinomonas sp. (strain MWYL1)).